We begin with the raw amino-acid sequence, 239 residues long: Ribonuclease PH (239 aa).

Phosphate is bound by residues arginine 86 and 124–126 (GTR).

Belongs to the RNase PH family. As to quaternary structure, homohexameric ring arranged as a trimer of dimers.

It carries out the reaction tRNA(n+1) + phosphate = tRNA(n) + a ribonucleoside 5'-diphosphate. Phosphorolytic 3'-5' exoribonuclease that plays an important role in tRNA 3'-end maturation. Removes nucleotide residues following the 3'-CCA terminus of tRNAs; can also add nucleotides to the ends of RNA molecules by using nucleoside diphosphates as substrates, but this may not be physiologically important. Probably plays a role in initiation of 16S rRNA degradation (leading to ribosome degradation) during starvation. This Rickettsia felis (strain ATCC VR-1525 / URRWXCal2) (Rickettsia azadi) protein is Ribonuclease PH.